The primary structure comprises 726 residues: Catalase-peroxidase (726 aa).

Positions 1 to 33 are disordered; it reads MSTTDDTHNTLSTGKCPFHQGGHDRSAGAGTAS. Residues 105–226 constitute a cross-link (tryptophyl-tyrosyl-methioninium (Trp-Tyr) (with M-252)); sequence WHGAGTYRSI…LGATEMGLIY (122 aa). Catalysis depends on His-106, which acts as the Proton acceptor. The tryptophyl-tyrosyl-methioninium (Tyr-Met) (with W-105) cross-link spans 226–252; sequence YVNPEGPDHSGEPLSAAAAIRATFGNM. His-267 is a binding site for heme b.

This sequence belongs to the peroxidase family. Peroxidase/catalase subfamily. Homodimer or homotetramer. The cofactor is heme b. Post-translationally, formation of the three residue Trp-Tyr-Met cross-link is important for the catalase, but not the peroxidase activity of the enzyme.

The enzyme catalyses H2O2 + AH2 = A + 2 H2O. It catalyses the reaction 2 H2O2 = O2 + 2 H2O. Its function is as follows. Bifunctional enzyme with both catalase and broad-spectrum peroxidase activity. The chain is Catalase-peroxidase from Salmonella typhi.